The chain runs to 129 residues: Large ribosomal subunit protein uL22 (129 aa).

It belongs to the universal ribosomal protein uL22 family. In terms of assembly, part of the 50S ribosomal subunit.

This protein binds specifically to 23S rRNA; its binding is stimulated by other ribosomal proteins, e.g. L4, L17, and L20. It is important during the early stages of 50S assembly. It makes multiple contacts with different domains of the 23S rRNA in the assembled 50S subunit and ribosome. Functionally, the globular domain of the protein is located near the polypeptide exit tunnel on the outside of the subunit, while an extended beta-hairpin is found that lines the wall of the exit tunnel in the center of the 70S ribosome. The chain is Large ribosomal subunit protein uL22 from Bartonella henselae (strain ATCC 49882 / DSM 28221 / CCUG 30454 / Houston 1) (Rochalimaea henselae).